The sequence spans 124 residues: S-adenosylmethionine decarboxylase proenzyme (124 aa).

Ser-70 functions as the Schiff-base intermediate with substrate; via pyruvic acid in the catalytic mechanism. A Pyruvic acid (Ser); by autocatalysis modification is found at Ser-70. The Proton acceptor; for processing activity role is filled by His-75. The Proton donor; for catalytic activity role is filled by Cys-90.

This sequence belongs to the prokaryotic AdoMetDC family. Type 1 subfamily. In terms of assembly, heterotetramer of two alpha and two beta chains arranged as a dimer of alpha/beta heterodimers. It depends on pyruvate as a cofactor. Is synthesized initially as an inactive proenzyme. Formation of the active enzyme involves a self-maturation process in which the active site pyruvoyl group is generated from an internal serine residue via an autocatalytic post-translational modification. Two non-identical subunits are generated from the proenzyme in this reaction, and the pyruvate is formed at the N-terminus of the alpha chain, which is derived from the carboxyl end of the proenzyme. The post-translation cleavage follows an unusual pathway, termed non-hydrolytic serinolysis, in which the side chain hydroxyl group of the serine supplies its oxygen atom to form the C-terminus of the beta chain, while the remainder of the serine residue undergoes an oxidative deamination to produce ammonia and the pyruvoyl group blocking the N-terminus of the alpha chain.

It carries out the reaction S-adenosyl-L-methionine + H(+) = S-adenosyl 3-(methylsulfanyl)propylamine + CO2. It functions in the pathway amine and polyamine biosynthesis; S-adenosylmethioninamine biosynthesis; S-adenosylmethioninamine from S-adenosyl-L-methionine: step 1/1. Its function is as follows. Catalyzes the decarboxylation of S-adenosylmethionine to S-adenosylmethioninamine (dcAdoMet), the propylamine donor required for the synthesis of the polyamines spermine and spermidine from the diamine putrescine. This chain is S-adenosylmethionine decarboxylase proenzyme, found in Pyrobaculum neutrophilum (strain DSM 2338 / JCM 9278 / NBRC 100436 / V24Sta) (Thermoproteus neutrophilus).